The sequence spans 185 residues: ATP synthase subunit b, chloroplastic (185 aa).

The chain crosses the membrane as a helical span at residues 27–49 (LATNPINLSVVLGVLIFFGKGVL).

The protein belongs to the ATPase B chain family. In terms of assembly, F-type ATPases have 2 components, F(1) - the catalytic core - and F(0) - the membrane proton channel. F(1) has five subunits: alpha(3), beta(3), gamma(1), delta(1), epsilon(1). F(0) has four main subunits: a(1), b(1), b'(1) and c(10-14). The alpha and beta chains form an alternating ring which encloses part of the gamma chain. F(1) is attached to F(0) by a central stalk formed by the gamma and epsilon chains, while a peripheral stalk is formed by the delta, b and b' chains.

The protein localises to the plastid. It localises to the chloroplast thylakoid membrane. Its function is as follows. F(1)F(0) ATP synthase produces ATP from ADP in the presence of a proton or sodium gradient. F-type ATPases consist of two structural domains, F(1) containing the extramembraneous catalytic core and F(0) containing the membrane proton channel, linked together by a central stalk and a peripheral stalk. During catalysis, ATP synthesis in the catalytic domain of F(1) is coupled via a rotary mechanism of the central stalk subunits to proton translocation. Component of the F(0) channel, it forms part of the peripheral stalk, linking F(1) to F(0). The sequence is that of ATP synthase subunit b, chloroplastic from Vitis vinifera (Grape).